The primary structure comprises 358 residues: Zinc transporter ZIP1 (358 aa).

At 1–7 (MDLLFAK) the chain is on the extracellular side. A helical transmembrane segment spans residues 8 to 28 (IICIGIFLVVTTFGCFIPHLM). Residues 29–53 (GLYKEKENEEKNKRVKNILSNLNCF) lie on the Cytoplasmic side of the membrane. The helical transmembrane segment at 54–74 (GSGFIFSIIMFHLLPETIHII) threads the bilayer. The Extracellular segment spans residues 75-91 (SDHGNIRIFNTSDSQMK). A helical transmembrane segment spans residues 92 to 112 (ILYIFFFVFIGFCMQLGLEYV). The Cytoplasmic portion of the chain corresponds to 113-186 (LPVDTNICCV…GKFLEILTLQ (74 aa)). Residues 187–207 (SFFLTISLAIHSCIEGMIIGT) traverse the membrane as a helical segment. Residues 208-213 (STDVNY) are Extracellular-facing. Residues 214–234 (VFISSFCILLHKWIAGVTVSL) traverse the membrane as a helical segment. Residues 235–246 (SLNSNNMNKTLK) are Cytoplasmic-facing. A helical membrane pass occupies residues 247 to 267 (AILLLTFVFASPLGIVLGHMA). At 268–273 (KSAGQK) the chain is on the extracellular side. The helical transmembrane segment at 274-294 (VTCLINAVSIGTLLFIGCEIL) threads the bilayer. Residues 295–310 (LNEIKQNISRKVRLCK) are Cytoplasmic-facing. A helical transmembrane segment spans residues 311–331 (WLSFCFSCLIAFALISFTTSM). Over 332-358 (APHTHGDIDTHVHVHHHDHDHDHGHNH) the chain is Extracellular.

It belongs to the ZIP transporter (TC 2.A.5) family. Homodimer.

The protein resides in the plastid. The protein localises to the apicoplast. Its subcellular location is the cell membrane. It catalyses the reaction Zn(2+)(in) = Zn(2+)(out). The catalysed reaction is Fe(2+)(in) = Fe(2+)(out). Its function is as follows. Transporter for the divalent zinc cation. Mediates the influx of zinc into cells from extracellular space. Can transport divalent iron ions. Does not transport manganese and cadmium cations. This is Zinc transporter ZIP1 from Plasmodium falciparum (isolate 3D7).